Reading from the N-terminus, the 115-residue chain is Large ribosomal subunit protein bL19 (115 aa).

This sequence belongs to the bacterial ribosomal protein bL19 family.

This protein is located at the 30S-50S ribosomal subunit interface and may play a role in the structure and function of the aminoacyl-tRNA binding site. This chain is Large ribosomal subunit protein bL19, found in Tolumonas auensis (strain DSM 9187 / NBRC 110442 / TA 4).